The following is a 604-amino-acid chain: Replication protein E1 (604 aa).

Residues 76-78 (KRK) carry the Nuclear localization signal motif. Residues Ser-81 and Ser-89 each carry the phosphoserine; by host modification. The interval 144 to 307 (QSGDIDISYT…TILGHQSAEA (164 aa)) is DNA-binding region. In terms of domain architecture, SF3 helicase spans 406-556 (VNFIMFLAAL…FPMKADNTPQ (151 aa)). 432 to 439 (GPPNTGKS) contacts ATP. Lys-513 is covalently cross-linked (Glycyl lysine isopeptide (Lys-Gly) (interchain with G-Cter in SUMO)). The tract at residues 579-604 (DQEDEGENGESQRAFQCSTRSANEHL) is disordered. Over residues 587-604 (GESQRAFQCSTRSANEHL) the composition is skewed to polar residues.

It belongs to the papillomaviridae E1 protein family. As to quaternary structure, can form hexamers. Interacts with E2 protein; this interaction increases E1 DNA binding specificity. Interacts with host DNA polymerase subunit POLA2. Interacts with host single stranded DNA-binding protein RPA1. Interacts with host TOP1; this interaction stimulates the enzymatic activity of TOP1. Phosphorylated. In terms of processing, sumoylated.

The protein localises to the host nucleus. The catalysed reaction is Couples ATP hydrolysis with the unwinding of duplex DNA by translocating in the 3'-5' direction.. The enzyme catalyses ATP + H2O = ADP + phosphate + H(+). Its function is as follows. ATP-dependent DNA 3'-5' helicase required for initiation of viral DNA replication. It forms a complex with the viral E2 protein. The E1-E2 complex binds to the replication origin which contains binding sites for both proteins. During the initial step, a dimer of E1 interacts with a dimer of protein E2 leading to a complex that binds the viral origin of replication with high specificity. Then, a second dimer of E1 displaces the E2 dimer in an ATP-dependent manner to form the E1 tetramer. Following this, two E1 monomers are added to each half of the site, which results in the formation of two E1 trimers on the viral ori. Subsequently, two hexamers will be created. The double hexamer acts as a bi-directional helicase machinery and unwinds the viral DNA and then recruits the host DNA polymerase to start replication. This Human papillomavirus 25 protein is Replication protein E1.